Consider the following 188-residue polypeptide: Threonylcarbamoyl-AMP synthase (188 aa).

The 186-residue stretch at 3 to 188 folds into the YrdC-like domain; it reads QLHPSDIKDI…RSGKILRNGQ (186 aa).

The protein belongs to the SUA5 family. TsaC subfamily.

It is found in the cytoplasm. The catalysed reaction is L-threonine + hydrogencarbonate + ATP = L-threonylcarbamoyladenylate + diphosphate + H2O. Required for the formation of a threonylcarbamoyl group on adenosine at position 37 (t(6)A37) in tRNAs that read codons beginning with adenine. Catalyzes the conversion of L-threonine, HCO(3)(-)/CO(2) and ATP to give threonylcarbamoyl-AMP (TC-AMP) as the acyladenylate intermediate, with the release of diphosphate. This Shewanella putrefaciens (strain CN-32 / ATCC BAA-453) protein is Threonylcarbamoyl-AMP synthase.